Reading from the N-terminus, the 303-residue chain is Ornithine carbamoyltransferase (303 aa).

Residues 52–55, Gln-79, Arg-103, and 130–133 each bind carbamoyl phosphate; these read STRT and HPCQ. L-ornithine contacts are provided by residues Asn-161, Asp-222, and 226 to 227; that span reads SM. Carbamoyl phosphate is bound by residues 262–263 and Lys-290; that span reads CL.

The protein belongs to the aspartate/ornithine carbamoyltransferase superfamily. OTCase family.

Its subcellular location is the cytoplasm. It carries out the reaction carbamoyl phosphate + L-ornithine = L-citrulline + phosphate + H(+). It functions in the pathway amino-acid biosynthesis; L-arginine biosynthesis; L-arginine from L-ornithine and carbamoyl phosphate: step 1/3. Functionally, reversibly catalyzes the transfer of the carbamoyl group from carbamoyl phosphate (CP) to the N(epsilon) atom of ornithine (ORN) to produce L-citrulline. The polypeptide is Ornithine carbamoyltransferase (Desulfotalea psychrophila (strain LSv54 / DSM 12343)).